A 92-amino-acid chain; its full sequence is Small ribosomal subunit protein uS19c (92 aa).

This sequence belongs to the universal ribosomal protein uS19 family.

The protein localises to the plastid. The protein resides in the chloroplast. Functionally, protein S19 forms a complex with S13 that binds strongly to the 16S ribosomal RNA. The sequence is that of Small ribosomal subunit protein uS19c from Huperzia lucidula (Shining clubmoss).